A 320-amino-acid chain; its full sequence is ATP-dependent 6-phosphofructokinase (320 aa).

Position 12 (glycine 12) interacts with ATP. ADP-binding positions include 22–26 (RGVVR) and 55–60 (RYSVSD). Residues 73 to 74 (RF) and 103 to 106 (GDGS) each bind ATP. Aspartate 104 contributes to the Mg(2+) binding site. 126 to 128 (TID) lines the substrate pocket. Aspartate 128 functions as the Proton acceptor in the catalytic mechanism. Residue arginine 155 participates in ADP binding. Substrate is bound by residues arginine 163 and 170–172 (MGR). ADP is bound by residues 186–188 (GCE), lysine 212, and 214–216 (KKH). Substrate is bound by residues glutamate 223, arginine 244, and 250-253 (HIQR).

The protein belongs to the phosphofructokinase type A (PFKA) family. ATP-dependent PFK group I subfamily. Prokaryotic clade 'B1' sub-subfamily. In terms of assembly, homotetramer. Mg(2+) serves as cofactor.

Its subcellular location is the cytoplasm. The enzyme catalyses beta-D-fructose 6-phosphate + ATP = beta-D-fructose 1,6-bisphosphate + ADP + H(+). It functions in the pathway carbohydrate degradation; glycolysis; D-glyceraldehyde 3-phosphate and glycerone phosphate from D-glucose: step 3/4. Allosterically activated by ADP and other diphosphonucleosides, and allosterically inhibited by phosphoenolpyruvate. Functionally, catalyzes the phosphorylation of D-fructose 6-phosphate to fructose 1,6-bisphosphate by ATP, the first committing step of glycolysis. This Serratia proteamaculans (strain 568) protein is ATP-dependent 6-phosphofructokinase.